A 141-amino-acid polypeptide reads, in one-letter code: Small ribosomal subunit protein eS17w (141 aa).

The protein belongs to the eukaryotic ribosomal protein eS17 family.

The chain is Small ribosomal subunit protein eS17w (RPS17D) from Arabidopsis thaliana (Mouse-ear cress).